Consider the following 631-residue polypeptide: MPTTFQEIPRERPVTPLLDRADTPAGLRRLAEADLETLADELRQELLYTVGQTGGHFGAGLGVIELTIALHYVFDTPDDRLVWDVGHQAYPHKILTGRRNRMLSLRQKDGIAAFPRRSESEYDTFGVGHSSTSISAALGMAIAARLQNSARKSIAVIGDGALTAGMAFEALNHAQEVNADMLVILNDNDMSISRNVGGLSNYLAKILSSRTYASMREGSKKVLSRLPGAWEIARRTEEYAKGMLVPGTLFEELGWNYIGPIDGHDLPTMIATLRNMRDLKGPQFLHVVTKKGKGFAPAEVDPIGYHAITKLEPADKPAAPKKVSGPKYSAVFGQWLCDMAAADNRLVGITPAMKEGSDLVDFSERYPQRYFDVAIAEQHAVTLAAGMACEGSKPVVAIYSTFLQRAYDQLIHDVAVQNLDVLFAIDRAGLVGEDGPTHAGSYDLSYLRCIPGMLVMTPSDENELRKMLSTGHLYNGPAAVRYPRGTGPNAPISGDLQPLEIGKGVVRRQGEKIALLVFGVQLAEAMQVAEQINATVVDMRFVKPLDEALVLELAGSHELLVTIEENAIMGGAGAAVGEFLASQAVLKPLLHLGLPDIYVEHAKPAQMLAECGLDAAGIEASVKARMAKLGL.

Thiamine diphosphate-binding positions include histidine 87 and 128–130 (GHS). Residue aspartate 159 coordinates Mg(2+). Thiamine diphosphate-binding positions include 160–161 (GA), asparagine 188, phenylalanine 295, and glutamate 377. Asparagine 188 is a binding site for Mg(2+).

It belongs to the transketolase family. DXPS subfamily. Homodimer. The cofactor is Mg(2+). Requires thiamine diphosphate as cofactor.

The enzyme catalyses D-glyceraldehyde 3-phosphate + pyruvate + H(+) = 1-deoxy-D-xylulose 5-phosphate + CO2. The protein operates within metabolic intermediate biosynthesis; 1-deoxy-D-xylulose 5-phosphate biosynthesis; 1-deoxy-D-xylulose 5-phosphate from D-glyceraldehyde 3-phosphate and pyruvate: step 1/1. Functionally, catalyzes the acyloin condensation reaction between C atoms 2 and 3 of pyruvate and glyceraldehyde 3-phosphate to yield 1-deoxy-D-xylulose-5-phosphate (DXP). The chain is 1-deoxy-D-xylulose-5-phosphate synthase from Pseudomonas putida (strain GB-1).